The primary structure comprises 281 residues: ATP phosphoribosyltransferase (281 aa).

Belongs to the ATP phosphoribosyltransferase family. Long subfamily. The cofactor is Mg(2+).

It is found in the cytoplasm. The enzyme catalyses 1-(5-phospho-beta-D-ribosyl)-ATP + diphosphate = 5-phospho-alpha-D-ribose 1-diphosphate + ATP. The protein operates within amino-acid biosynthesis; L-histidine biosynthesis; L-histidine from 5-phospho-alpha-D-ribose 1-diphosphate: step 1/9. With respect to regulation, feedback inhibited by histidine. Functionally, catalyzes the condensation of ATP and 5-phosphoribose 1-diphosphate to form N'-(5'-phosphoribosyl)-ATP (PR-ATP). Has a crucial role in the pathway because the rate of histidine biosynthesis seems to be controlled primarily by regulation of HisG enzymatic activity. The polypeptide is ATP phosphoribosyltransferase (Corynebacterium efficiens (strain DSM 44549 / YS-314 / AJ 12310 / JCM 11189 / NBRC 100395)).